The following is a 585-amino-acid chain: Frizzled-5 (585 aa).

Positions Met1–Ala26 are cleaved as a signal peptide. The Extracellular portion of the chain corresponds to Ala27–Trp238. The FZ domain maps to Ser28–Tyr150. 5 disulfides stabilise this stretch: Cys33–Cys94, Cys41–Cys87, Cys78–Cys116, Cys105–Cys147, and Cys109–Cys133. An N-linked (GlcNAc...) asparagine glycan is attached at Asn47. The N-linked (GlcNAc...) asparagine glycan is linked to Asn151. The interval Thr156–Cys182 is disordered. A helical membrane pass occupies residues Ile239–Ile259. Topologically, residues Asp260–Pro270 are cytoplasmic. Residues Ile271–Val291 form a helical membrane-spanning segment. At Gly292 to Cys315 the chain is on the extracellular side. The helical transmembrane segment at Thr316 to Leu336 threads the bilayer. Residues Ser337–Gln358 are Cytoplasmic-facing. A helical membrane pass occupies residues Tyr359–Ser379. At Ser380 to Gly402 the chain is on the extracellular side. A helical membrane pass occupies residues Phe403–Phe423. Residues Val424–Arg449 lie on the Cytoplasmic side of the membrane. The chain crosses the membrane as a helical span at residues Ile450–Tyr470. Topologically, residues Glu471 to Tyr500 are extracellular. Residues Trp501 to Ile521 form a helical membrane-spanning segment. Residues Trp522–Val585 lie on the Cytoplasmic side of the membrane. The short motif at Leu582 to His584 is the PDZ-binding element.

The protein belongs to the G-protein coupled receptor Fz/Smo family. Binding of unsaturated fatty acid molecules (via FZ domain) promotes homodimerization (via FZ domain). Interacts with WNT2B. Interacts with WNT7A. Interacts with GOPC. In terms of processing, ubiquitinated by RNF43 and ZNRF3, leading to its degradation by the proteasome. Detected in hippocampus (at protein level). Expressed in eye, kidney, lung, chondrocytes, epithelial cells of the small intestine and gobelet cells of the colon.

Its subcellular location is the cell membrane. It is found in the golgi apparatus membrane. It localises to the synapse. The protein localises to the perikaryon. The protein resides in the cell projection. Its subcellular location is the dendrite. It is found in the axon. Receptor for Wnt proteins. Functions in the canonical Wnt/beta-catenin signaling pathway. In vitro activates WNT2, WNT10B, WNT5A, but not WNT2B or WNT4 signaling. In neurons, activation by WNT7A promotes formation of synapses. May be involved in transduction and intercellular transmission of polarity information during tissue morphogenesis and/or in differentiated tissues. Plays a role in yolk sac angiogenesis and in placental vascularization. Plays a role in ocular development. The sequence is that of Frizzled-5 (Fzd5) from Mus musculus (Mouse).